We begin with the raw amino-acid sequence, 488 residues long: B-type flagellin (488 aa).

It belongs to the bacterial flagellin family. Phosphorylated on tyrosine residue(s).

The protein localises to the secreted. It is found in the bacterial flagellum. Its function is as follows. Flagellin is the subunit protein which polymerizes to form the filaments of bacterial flagella. This is B-type flagellin (fliC) from Pseudomonas aeruginosa (strain ATCC 15692 / DSM 22644 / CIP 104116 / JCM 14847 / LMG 12228 / 1C / PRS 101 / PAO1).